Here is a 403-residue protein sequence, read N- to C-terminus: Malate dehydrogenase, chloroplastic (403 aa).

Residues 1-80 constitute a chloroplast transit peptide; it reads MATATSASLF…DKKPYGFKIN (80 aa). NAD(+)-binding positions include 89–95 and Asp115; that span reads GAAGGIG. The substrate site is built by Arg162 and Arg168. NAD(+)-binding positions include Asn175 and 198 to 200; that span reads ISN. Residues Asn200 and Arg234 each contribute to the substrate site. His258 serves as the catalytic Proton acceptor. Met309 serves as a coordination point for NAD(+).

Belongs to the LDH/MDH superfamily. MDH type 1 family. Homodimer. As to expression, expressed in rosette leaves. Expressed in meristematic regions of roots and shoots, cotyledons, young leaves, trichomes, stamen, pollen, tapetum, gynoecium and ovules.

It localises to the plastid. It is found in the chloroplast stroma. It catalyses the reaction (S)-malate + NAD(+) = oxaloacetate + NADH + H(+). Functionally, catalyzes a reversible NAD-dependent dehydrogenase reaction involved in central metabolism and redox homeostasis between organelle compartments. Plays a key role in the metabolism of dark chloroplasts and non-green plastids. Essential for embryo viability. Plays an essential role in heterotrophic metabolism in embryos, and autotrophic metabolism in photosynthetic tissues as well. The polypeptide is Malate dehydrogenase, chloroplastic (Arabidopsis thaliana (Mouse-ear cress)).